Here is a 712-residue protein sequence, read N- to C-terminus: Polyribonucleotide nucleotidyltransferase (712 aa).

2 residues coordinate Mg(2+): Asp493 and Asp499. A KH domain is found at 560–619; sequence PRLLTFKVDPEDIGKIIGPGGKTVRGITEATGAKVDISDDGTITVSSSVGGQAEAARAMI. The S1 motif domain maps to 629-697; sequence GQVYLGKVTR…HKGRINLTRL (69 aa).

It belongs to the polyribonucleotide nucleotidyltransferase family. It depends on Mg(2+) as a cofactor.

It is found in the cytoplasm. The enzyme catalyses RNA(n+1) + phosphate = RNA(n) + a ribonucleoside 5'-diphosphate. In terms of biological role, involved in mRNA degradation. Catalyzes the phosphorolysis of single-stranded polyribonucleotides processively in the 3'- to 5'-direction. This chain is Polyribonucleotide nucleotidyltransferase, found in Synechococcus sp. (strain JA-2-3B'a(2-13)) (Cyanobacteria bacterium Yellowstone B-Prime).